A 116-amino-acid chain; its full sequence is Protein Wnt-5b (116 aa).

A lipid anchor (O-palmitoleoyl serine; by PORCN) is attached at S1. N-linked (GlcNAc...) asparagine glycans are attached at residues N69 and N83. C82 and C97 are oxidised to a cystine.

It belongs to the Wnt family. In terms of processing, palmitoleoylation is required for efficient binding to frizzled receptors. Depalmitoleoylation leads to Wnt signaling pathway inhibition.

It localises to the secreted. Its subcellular location is the extracellular space. The protein localises to the extracellular matrix. Functionally, ligand for members of the frizzled family of seven transmembrane receptors. Probable developmental protein. May be a signaling molecule which affects the development of discrete regions of tissues. Is likely to signal over only few cell diameters. In Plethodon jordani (Red-cheeked salamander), this protein is Protein Wnt-5b (WNT-5B).